The following is a 401-amino-acid chain: Tryptophan synthase beta chain (401 aa).

K91 is modified (N6-(pyridoxal phosphate)lysine).

Belongs to the TrpB family. In terms of assembly, tetramer of two alpha and two beta chains. Pyridoxal 5'-phosphate is required as a cofactor.

It catalyses the reaction (1S,2R)-1-C-(indol-3-yl)glycerol 3-phosphate + L-serine = D-glyceraldehyde 3-phosphate + L-tryptophan + H2O. Its pathway is amino-acid biosynthesis; L-tryptophan biosynthesis; L-tryptophan from chorismate: step 5/5. Functionally, the beta subunit is responsible for the synthesis of L-tryptophan from indole and L-serine. This Lactococcus lactis subsp. cremoris (strain MG1363) protein is Tryptophan synthase beta chain.